We begin with the raw amino-acid sequence, 163 residues long: Nucleotide-binding protein HSM_1099 (163 aa).

This sequence belongs to the YajQ family.

Nucleotide-binding protein. This chain is Nucleotide-binding protein HSM_1099, found in Histophilus somni (strain 2336) (Haemophilus somnus).